The chain runs to 241 residues: ATP synthase subunit a (241 aa).

Helical transmembrane passes span 30–50 (GQVFLTSWILLGALLVFISFG), 91–111 (FIGTLFLFVFVSNWGGALIPW), 128–148 (INTTIALALLVSLSYFYAGLS), 193–213 (LVVGVLVFLVPLILPIPVMFL), and 214–234 (GLFTSAIQALIFATLAAYYIG).

It belongs to the ATPase A chain family. In terms of assembly, F-type ATPases have 2 components, CF(1) - the catalytic core - and CF(0) - the membrane proton channel. CF(1) has five subunits: alpha(3), beta(3), gamma(1), delta(1), epsilon(1). CF(0) has four main subunits: a, b, b' and c.

It localises to the cellular thylakoid membrane. Its function is as follows. Key component of the proton channel; it plays a direct role in the translocation of protons across the membrane. The sequence is that of ATP synthase subunit a from Prochlorococcus marinus (strain AS9601).